We begin with the raw amino-acid sequence, 264 residues long: Glutamate racemase (264 aa).

Substrate contacts are provided by residues 10-11 and 42-43; these read DS and YG. Catalysis depends on Cys73, which acts as the Proton donor/acceptor. 74 to 75 contributes to the substrate binding site; it reads NT. The active-site Proton donor/acceptor is the Cys183. Substrate is bound at residue 184 to 185; sequence TH.

This sequence belongs to the aspartate/glutamate racemases family.

It catalyses the reaction L-glutamate = D-glutamate. It participates in cell wall biogenesis; peptidoglycan biosynthesis. In terms of biological role, provides the (R)-glutamate required for cell wall biosynthesis. This is Glutamate racemase from Streptococcus pyogenes serotype M2 (strain MGAS10270).